The chain runs to 141 residues: Regulator of ribonuclease activity B (141 aa).

Residues 119 to 132 (DEDFDDEDDDEDYD) show a composition bias toward acidic residues. Residues 119 to 141 (DEDFDDEDDDEDYDKDGFPIERH) are disordered.

It belongs to the RraB family. In terms of assembly, interacts with the C-terminal region of Rne.

It localises to the cytoplasm. Functionally, globally modulates RNA abundance by binding to RNase E (Rne) and regulating its endonucleolytic activity. Can modulate Rne action in a substrate-dependent manner by altering the composition of the degradosome. In Shewanella amazonensis (strain ATCC BAA-1098 / SB2B), this protein is Regulator of ribonuclease activity B.